The chain runs to 134 residues: Probable thionin-2.4 (134 aa).

An N-terminal signal peptide occupies residues methionine 1 to alanine 24. Disulfide bonds link cysteine 27–cysteine 64, cysteine 28–cysteine 56, and cysteine 40–cysteine 50. Positions aspartate 71–alanine 134 are cleaved as a propeptide — acidic domain.

Belongs to the plant thionin (TC 1.C.44) family.

The protein localises to the secreted. Its function is as follows. Thionins are small plant proteins which are toxic to animal cells. They seem to exert their toxic effect at the level of the cell membrane. Their precise function is not known. This chain is Probable thionin-2.4, found in Arabidopsis thaliana (Mouse-ear cress).